The primary structure comprises 778 residues: Beta-phellandrene synthase (neryl-diphosphate-cyclizing), chloroplastic (778 aa).

The transit peptide at 1 to 36 (MIVGYRSTIITLSHPKLGNGKTISSNAIFQRSCRVR) directs the protein to the chloroplast. Mg(2+)-binding residues include Asp531, Asn676, and Glu684. A DDXXD motif motif is present at residues 531 to 535 (DDHFE).

It belongs to the terpene synthase family. Tpse subfamily. Mg(2+) is required as a cofactor. As to expression, trichomes.

It is found in the plastid. The protein resides in the chloroplast. The catalysed reaction is neryl diphosphate = beta-phellandrene + diphosphate. In terms of biological role, monoterpene synthase catalyzing the production of beta-phellandrene from neryl diphosphate. Also produces lower amounts of delta-2-carene, alpha-phellandrene and limonene. When incubated in vitro with geranyl diphosphate, catalyzes the formation of acyclic myrcene and ocimene as major products in addition to beta-phellandrene. The polypeptide is Beta-phellandrene synthase (neryl-diphosphate-cyclizing), chloroplastic (PHS1) (Solanum lycopersicum (Tomato)).